A 190-amino-acid polypeptide reads, in one-letter code: MKGKLKKFYNLVEALETLPSIGKKSAGRLAFHMVLHSPMDALKLAHAIEDAVSSIHRCTQCGGLSEDELCYICSDELRDRSSLCLVESARDIYVIEESGEYHGLYFVFESLNERILANLKEMIKNNGVQEIIFAFTPSMQSDATMLYIEDQLQEFHLHFTKIAQGVPTGVHLENVDMLSLSKAISERVKI.

A C4-type zinc finger spans residues 58 to 73; the sequence is CTQCGGLSEDELCYIC. In terms of domain architecture, Toprim spans 81–167; sequence SSLCLVESAR…HFTKIAQGVP (87 aa).

Belongs to the RecR family.

May play a role in DNA repair. It seems to be involved in an RecBC-independent recombinational process of DNA repair. It may act with RecF and RecO. The sequence is that of Recombination protein RecR from Nitratiruptor sp. (strain SB155-2).